A 704-amino-acid polypeptide reads, in one-letter code: 1,4-alpha-glucan-branching enzyme (704 aa).

2 residues coordinate (1,4-alpha-D-glucosyl)n: Trp94 and Lys131. At Ser190 the chain carries Phosphoserine. Asp356 serves as the catalytic Nucleophile. Glu417 (proton donor) is an active-site residue.

The protein belongs to the glycosyl hydrolase 13 family. GlgB subfamily.

The protein resides in the cytoplasm. The catalysed reaction is Transfers a segment of a (1-&gt;4)-alpha-D-glucan chain to a primary hydroxy group in a similar glucan chain.. Its pathway is glycan biosynthesis; glycogen biosynthesis. Its function is as follows. Glycogen-branching enzyme participates in the glycogen biosynthetic process along with glycogenin and glycogen synthase. Generates alpha-1,6-glucosidic branches from alpha-1,4-linked glucose chains, to increase solubility of the glycogen polymer. This is 1,4-alpha-glucan-branching enzyme (GLC3) from Saccharomyces cerevisiae (strain ATCC 204508 / S288c) (Baker's yeast).